The chain runs to 530 residues: Tetrahydroberberine oxidase (530 aa).

Residues 1-24 form the signal peptide; sequence MSKMASSIFATFSLLSSLLPTSLA. Cysteine 36 and cysteine 94 are joined by a disulfide. The N-linked (GlcNAc...) asparagine glycan is linked to asparagine 51. An FAD-binding PCMH-type domain is found at 72–246; the sequence is TTPKPNFIVT…LAWKIRLVPV (175 aa). Residues 109–171 constitute a cross-link (6-(S-cysteinyl)-8alpha-(pros-histidyl)-FAD (His-Cys)); it reads HDFEGLSYVS…GVHAFPAGLC (63 aa). N-linked (GlcNAc...) asparagine glycosylation occurs at asparagine 483.

The protein belongs to the oxygen-dependent FAD-linked oxidoreductase family. FAD serves as cofactor. The FAD cofactor is bound via a bicovalent 6-S-cysteinyl, 8alpha-N1-histidyl FAD linkage.

The enzyme catalyses (S)-canadine + 2 O2 + H(+) = berberine + 2 H2O2. In terms of biological role, catalyzes the oxidation of different tetrahydroprotoberberines, such as (S)-canadine, (S)-scoulerine and (S)-corypalmine. Catalyzes the oxidation of (S)-coreximine and (S)-tetrahydropalmatine. Catalyzes the oxidation of different 1-benzylisoquinoline alkaloids, such as (S)-norreticuline, (S)-nororientaline, (S)-coclaurine and (S)-norisoorientaline. Exhibits strict specificity for the (S)-enantiomer of tetrahydroprotoberbirines and 1-benzylisoquinoline alkaloids. The polypeptide is Tetrahydroberberine oxidase (Berberis wilsoniae (Mrs Wilson's barberry)).